The chain runs to 261 residues: 1-(5-phosphoribosyl)-5-[(5-phosphoribosylamino)methylideneamino] imidazole-4-carboxamide isomerase (261 aa).

The active-site Proton acceptor is D7. D129 (proton donor) is an active-site residue.

It belongs to the HisA/HisF family.

It is found in the cytoplasm. It catalyses the reaction 1-(5-phospho-beta-D-ribosyl)-5-[(5-phospho-beta-D-ribosylamino)methylideneamino]imidazole-4-carboxamide = 5-[(5-phospho-1-deoxy-D-ribulos-1-ylimino)methylamino]-1-(5-phospho-beta-D-ribosyl)imidazole-4-carboxamide. Its pathway is amino-acid biosynthesis; L-histidine biosynthesis; L-histidine from 5-phospho-alpha-D-ribose 1-diphosphate: step 4/9. This chain is 1-(5-phosphoribosyl)-5-[(5-phosphoribosylamino)methylideneamino] imidazole-4-carboxamide isomerase, found in Colwellia psychrerythraea (strain 34H / ATCC BAA-681) (Vibrio psychroerythus).